Reading from the N-terminus, the 236-residue chain is Acetate--CoA ligase [ADP-forming] II subunit beta (236 aa).

Residues 26–62 form the ATP-grasp domain; sequence KQVLKAYGLPVPEEKLAKTLDEALKYAEEIGYPVAMK. 52-63 lines the ATP pocket; that stretch reads AEEIGYPVAMKL.

This sequence belongs to the acetate CoA ligase beta subunit family. As to quaternary structure, heterotetramer of two alpha and two beta subunits.

The catalysed reaction is acetate + ATP + CoA = acetyl-CoA + ADP + phosphate. Catalyzes the reversible formation of acetate and ATP from acetyl-CoA by using ADP and phosphate. Can use other substrates such as phenylacetyl-CoA, indoleacetyl-CoA and isobutyryl-CoA, but not succinyl-CoA. Seems to be involved primarily in the degradation of aryl-CoA esters to the corresponding acids. Participates in the conversion of acetyl-CoA to acetate and in the degradation of branched-chain amino acids via branched-chain-acyl-CoA esters. The sequence is that of Acetate--CoA ligase [ADP-forming] II subunit beta from Pyrococcus furiosus (strain ATCC 43587 / DSM 3638 / JCM 8422 / Vc1).